A 118-amino-acid polypeptide reads, in one-letter code: Sarafotoxin-i1 (118 aa).

The signal sequence occupies residues 1–23; sequence MALLPRLAAGGLLLLLALAALDG. A propeptide spanning residues 24 to 84 is cleaved from the precursor; that stretch reads KPAPPKLLQK…LSPLRKPQPL (61 aa). Cystine bridges form between C85-C99 and C87-C95. Positions 112–118 are excised as a propeptide; sequence PSPIQSS.

Belongs to the endothelin/sarafotoxin family. Post-translationally, different length molecules ranging from 15 (85-99) to 30 amino acids (85-114) have been found in the venom. As to expression, expressed by the venom gland.

It is found in the secreted. Functionally, vasoconstrictor activity. These toxins cause cardiac arrest probably as a result of coronary vasospasm. Its function is as follows. Sarafotoxin-i3: vasoconstrictor activity. Causes cardiac arrest probably as a result of coronary vasospasm. Displays low agonistic activities towards endothelin-2 receptor (EDNRB) (displays affinity in the micromolar range). This chain is Sarafotoxin-i1, found in Atractaspis irregularis (Variable burrowing asp).